The following is a 152-amino-acid chain: Transcriptional regulator MraZ (152 aa).

2 SpoVT-AbrB domains span residues Ala-5 to Glu-52 and Ala-81 to Ala-124.

It belongs to the MraZ family. Forms oligomers.

The protein localises to the cytoplasm. It is found in the nucleoid. The sequence is that of Transcriptional regulator MraZ from Shewanella sp. (strain ANA-3).